We begin with the raw amino-acid sequence, 604 residues long: Aspartate--tRNA(Asp/Asn) ligase (604 aa).

Glutamate 177 contacts L-aspartate. The interval 201–204 is aspartate; that stretch reads QLFK. Arginine 223 lines the L-aspartate pocket. Residues 223–225 and glutamine 232 each bind ATP; that span reads RDE. Histidine 457 contacts L-aspartate. Glutamate 495 serves as a coordination point for ATP. An L-aspartate-binding site is contributed by arginine 502. 547 to 550 lines the ATP pocket; that stretch reads GLDR.

Belongs to the class-II aminoacyl-tRNA synthetase family. Type 1 subfamily. Homodimer.

Its subcellular location is the cytoplasm. The catalysed reaction is tRNA(Asx) + L-aspartate + ATP = L-aspartyl-tRNA(Asx) + AMP + diphosphate. Aspartyl-tRNA synthetase with relaxed tRNA specificity since it is able to aspartylate not only its cognate tRNA(Asp) but also tRNA(Asn). Reaction proceeds in two steps: L-aspartate is first activated by ATP to form Asp-AMP and then transferred to the acceptor end of tRNA(Asp/Asn). The chain is Aspartate--tRNA(Asp/Asn) ligase from Synechococcus sp. (strain RCC307).